The sequence spans 182 residues: NADH-quinone oxidoreductase subunit B 2 (182 aa).

Residues Cys55, Cys56, Cys120, and Cys150 each coordinate [4Fe-4S] cluster.

Belongs to the complex I 20 kDa subunit family. NDH-1 is composed of 14 different subunits. Subunits NuoB, C, D, E, F, and G constitute the peripheral sector of the complex. Requires [4Fe-4S] cluster as cofactor.

It localises to the cell inner membrane. It carries out the reaction a quinone + NADH + 5 H(+)(in) = a quinol + NAD(+) + 4 H(+)(out). Functionally, NDH-1 shuttles electrons from NADH, via FMN and iron-sulfur (Fe-S) centers, to quinones in the respiratory chain. The immediate electron acceptor for the enzyme in this species is believed to be ubiquinone. Couples the redox reaction to proton translocation (for every two electrons transferred, four hydrogen ions are translocated across the cytoplasmic membrane), and thus conserves the redox energy in a proton gradient. The sequence is that of NADH-quinone oxidoreductase subunit B 2 from Sorangium cellulosum (strain So ce56) (Polyangium cellulosum (strain So ce56)).